The following is a 3142-amino-acid chain: Huntingtin (3142 aa).

A sufficient for interaction with TPR region spans residues 3-13; it reads TLEKLMKAFES. At Lys9 the chain carries N6-acetyllysine. Residues 14 to 85 form a disordered region; sequence LKSFQQQQQQ…PGPAVAEEPL (72 aa). The span at 18-37 shows a compositional bias: low complexity; sequence QQQQQQQQQQQQQQQQQQQQ. Residues 38–78 are compositionally biased toward pro residues; the sequence is QPPPPPPPPPPPQLPQPPPQAQPLLPQPQPPPPPPPPPPGP. N6-acetyllysine occurs at positions 176 and 234. HEAT repeat units follow at residues 204–241, 246–283, and 316–360; these read PYLV…SFGN, NEIK…HSRR, and LTLR…VYEL. An N6-acetyllysine modification is found at Lys343. Phosphoserine is present on residues Ser411, Ser417, Ser419, and Ser432. An N6-acetyllysine modification is found at Lys442. The disordered stretch occupies residues 447 to 469; the sequence is EEEALEDDSESRSDVSSSALTAS. The tract at residues 491-502 is interaction with ZDHHC17; the sequence is GHDIITEQPRSQ. The disordered stretch occupies residues 517-583; it reads LTSSATDGDE…TPSDSSEIVL (67 aa). Low complexity predominate over residues 531–545; that stretch reads SHSSSQVSAVPSDPA. Residues 550–579 show a composition bias toward polar residues; that stretch reads DGTQASSPISDSSQTTTEGPDSAVTPSDSS. Gly551 carries N-myristoyl glycine lipidation. Phosphoserine is present on residues Ser640 and Ser643. HEAT repeat units lie at residues 802-839 and 902-940; these read FSLA…SLCS and KLQE…KLFY. The interval 1176–1225 is disordered; it reads PSLSPIRRKGKEKEPGEQASVPLSPKKGSEASAASRQSDTSGPVTTSKSS. Ser1179 and Ser1199 each carry phosphoserine; by CDK5. Residues 1207-1225 are compositionally biased toward polar residues; sequence SAASRQSDTSGPVTTSKSS. Phosphoserine is present on residues Ser1870 and Ser1874. Positions 2330 to 2351 are disordered; that stretch reads ERRTNTPKAISEEEEEVDPNTQ. Positions 2395–2404 match the Nuclear export signal motif; the sequence is IIISLARLPL. A disordered region spans residues 2633 to 2662; that stretch reads EEEWDEEEEEEADAPAPSSPPTSPVNSRKH. The span at 2634–2645 shows a compositional bias: acidic residues; it reads EEWDEEEEEEAD.

Belongs to the huntingtin family. Interacts with PFN1. Interacts through its N-terminus with PRPF40A. Interacts with PQBP1. Interacts with SETD2. Interacts with SH3GLB1. Interacts with SYVN. Interacts with TPR; the interaction is inhibited by forms of Huntingtin with expanded polyglutamine stretch. Interacts with ZDHHC13 (via ANK repeats). Interacts with ZDHHC17 (via ANK repeats). Interacts with F8A1/F8A2/F8A3. Found in a complex with F8A1/F8A2/F8A3, HTT and RAB5A; mediates the recruitment of HTT by RAB5A. In terms of processing, cleaved by caspases downstream of the polyglutamine stretch. The resulting N-terminal fragments are cytotoxic and provokes apoptosis. Forms with expanded polyglutamine expansion are specifically ubiquitinated by SYVN1, which promotes their proteasomal degradation. Post-translationally, phosphorylation at Ser-1179 and Ser-1199 by CDK5 in response to DNA damage in nuclei of neurons protects neurons against polyglutamine expansion as well as DNA damage mediated toxicity. In terms of processing, myristoylated at Gly-551, following proteolytic cleavage at Asp-550. Expressed in the brain cortex (at protein level). Widely expressed with the highest level of expression in the brain (nerve fibers, varicosities, and nerve endings). In the brain, the regions where it can be mainly found are the cerebellar cortex, the neocortex, the striatum, and the hippocampal formation.

Its subcellular location is the cytoplasm. It localises to the nucleus. It is found in the early endosome. The protein resides in the cytoplasmic vesicle. The protein localises to the autophagosome. May play a role in microtubule-mediated transport or vesicle function. Functionally, promotes the formation of autophagic vesicles. In Homo sapiens (Human), this protein is Huntingtin (HTT).